The primary structure comprises 407 residues: MAPHLNIVPSMFVLLLLFISASKVQSDAFDVVAKFGAKADGKTDLSKPFLDAWKEACASVTPSTVVIPKGTYLLSKVNLEGPCKAPIEINVQGTIQAPADPSAFKDPNWVRFYSVENFKMFGGGIFDGQGSIAYEKNTCENREFRSKLPVNIRFDFLTNALIQDITSKDSKLFHINVFACKNITLERLKIEAPDESPNTDGIHMGKSEGVNIIASDIKTGDDCISIGDGTKNMVIKEITCGPGHGISIGSLGKFQNEEPVEGIKISNCTITNTSNGARIKTWPGEHGGAVSEIHFEDITMNNVSSPILIDQQYCPWNKCKKNEESKVKLSNISFKNIRGTSALPEAIKFICSGSSPCQNVELADIDIKHNGAEPATSQCLNVKPITSGKLNPIPCSGPVPKTPSATA.

An N-terminal signal peptide occupies residues 1–26 (MAPHLNIVPSMFVLLLLFISASKVQS). PbH1 repeat units follow at residues 180–206 (CKNI…HMGK) and 207–228 (SEGV…SIGD). The N-linked (GlcNAc...) asparagine glycan is linked to Asn182. Asp221 acts as the Proton donor in catalysis. Cys223 and Cys240 are oxidised to a cystine. Residue His244 is part of the active site. PbH1 repeat units lie at residues 260–281 (VEGI…RIKT) and 290–311 (VSEI…LIDQ). Residues Asn267, Asn272, Asn302, and Asn331 are each glycosylated (N-linked (GlcNAc...) asparagine). 2 disulfide bridges follow: Cys351–Cys357 and Cys379–Cys395. A PbH1 5 repeat occupies 357–384 (CQNVELADIDIKHNGAEPATSQCLNVKP).

This sequence belongs to the glycosyl hydrolase 28 family. In terms of tissue distribution, pollen.

The protein resides in the secreted. Its subcellular location is the cell wall. The enzyme catalyses (1,4-alpha-D-galacturonosyl)n+m + H2O = (1,4-alpha-D-galacturonosyl)n + (1,4-alpha-D-galacturonosyl)m.. Its function is as follows. May function in the depolymerization of the pectin in its walls during pollen tube elongation, or in that of the pistil during pollination. The protein is Polygalacturonase (G9) of Gossypium hirsutum (Upland cotton).